A 244-amino-acid chain; its full sequence is Ribonuclease HII (244 aa).

In terms of domain architecture, RNase H type-2 spans 31-222 (RLIAGVDEAG…VRLALQGREG (192 aa)). A divalent metal cation is bound by residues D37, E38, and D130.

It belongs to the RNase HII family. It depends on Mn(2+) as a cofactor. Mg(2+) is required as a cofactor.

It localises to the cytoplasm. The enzyme catalyses Endonucleolytic cleavage to 5'-phosphomonoester.. Functionally, endonuclease that specifically degrades the RNA of RNA-DNA hybrids. This Xanthomonas axonopodis pv. citri (strain 306) protein is Ribonuclease HII.